A 169-amino-acid chain; its full sequence is Macrocypin-1a (169 aa).

This sequence belongs to the protease inhibitor I85 family.

Functionally, inhibits papain and cysteine cathepsin endopeptidases, and also inhibits cathepsins B and H, which exhibit both exopeptidase and endopeptidase activities. The protein is Macrocypin-1a of Macrolepiota procera (Parasol mushroom).